Reading from the N-terminus, the 471-residue chain is Tryptophan--tRNA ligase, cytoplasmic (471 aa).

The WHEP-TRS domain occupies 8 to 64; the sequence is SLLELFNSIATQGELVRSLKAGNASKDEIDSAVKMLVSLKMSYKAAAGEDYKADCPP. Positions 59–79 are disordered; it reads KADCPPGNPAPTSNHGPDATE. Lysine 154 carries the N6-succinyllysine modification. The 'HIGH' region signature appears at 164-173; sequence PSSEAMHVGH. Residues 349 to 353 carry the 'KMSKS' region motif; the sequence is KMSAS. Serine 351 carries the post-translational modification Phosphoserine.

Belongs to the class-I aminoacyl-tRNA synthetase family. Homodimer. Interacts with an oxidized form of GAPDH. GAPDH stimulates the aminoacylation activity of isoform 2. Post-translationally, proteolytic cleavage generates 2 forms; T1-TrpRS and T2-TrpRS.

The protein localises to the cytoplasm. The catalysed reaction is tRNA(Trp) + L-tryptophan + ATP = L-tryptophyl-tRNA(Trp) + AMP + diphosphate + H(+). Functionally, catalyzes the attachment of tryptophan to tRNA(Trp) in a two-step reaction: tryptophan is first activated by ATP to form Trp-AMP and then transferred to the acceptor end of the tRNA(Trp). Its function is as follows. Has no angiostatic activity. In terms of biological role, possesses an angiostatic activity but has no aminoacylation activity. Inhibits fluid shear stress-activated responses of endothelial cells. Regulates ERK, Akt, and eNOS activation pathways that are associated with angiogenesis, cytoskeletal reorganization and shear stress-responsive gene expression. Has an angiostatic activity. In Homo sapiens (Human), this protein is Tryptophan--tRNA ligase, cytoplasmic.